The sequence spans 94 residues: Putative membrane protein insertion efficiency factor (94 aa).

It belongs to the UPF0161 family.

The protein resides in the cell inner membrane. In terms of biological role, could be involved in insertion of integral membrane proteins into the membrane. The polypeptide is Putative membrane protein insertion efficiency factor (Albidiferax ferrireducens (strain ATCC BAA-621 / DSM 15236 / T118) (Rhodoferax ferrireducens)).